Here is a 561-residue protein sequence, read N- to C-terminus: DNA ligase B (561 aa).

Catalysis depends on Lys128, which acts as the N6-AMP-lysine intermediate.

Belongs to the NAD-dependent DNA ligase family. LigB subfamily.

It carries out the reaction NAD(+) + (deoxyribonucleotide)n-3'-hydroxyl + 5'-phospho-(deoxyribonucleotide)m = (deoxyribonucleotide)n+m + AMP + beta-nicotinamide D-nucleotide.. Its function is as follows. Catalyzes the formation of phosphodiester linkages between 5'-phosphoryl and 3'-hydroxyl groups in double-stranded DNA using NAD as a coenzyme and as the energy source for the reaction. The polypeptide is DNA ligase B (Pseudomonas syringae pv. tomato (strain ATCC BAA-871 / DC3000)).